The following is a 196-amino-acid chain: MQSERIYLVWAHPRHDSLTAHIADAIHQRAMERKIQVTELDLYRRNFNPVMTPEDEPDWKNMDKRYSPEVHQLYSELLEHDTLVVVFPLWWYSFPAMLKGYIDRVWNNGLAYGDGHKLPFNKVRWVALVGGDKESFVQMGWEKNISDYLKNMCSYLGIEDADVTFLCNTVVFDGEELHASYYQSLLSQVRDMVDAL.

The protein belongs to the NAD(P)H dehydrogenase (quinone) family.

This is an uncharacterized protein from Escherichia coli (strain K12).